Consider the following 671-residue polypeptide: Probable potassium transport system protein Kup (671 aa).

The disordered stretch occupies residues 1–43 (MSQIPSPNDPASTGAAPSSAAVPAGPSATPAPSPTAGFSLPGH). A compositionally biased stretch (low complexity) spans 10 to 37 (PASTGAAPSSAAVPAGPSATPAPSPTAG). A run of 12 helical transmembrane segments spans residues 52-72 (LAALAVGALGVVYGDIGTSPL), 92-112 (VLGVLSLVFWAMTFVVTFKYM), 147-167 (LMLGLFGAALLYGDGIITPAI), 181-201 (PAMERAVVPATVVILVFLFLF), 209-229 (VGAVFGPVMLVWFATIAVLGV), 255-275 (GWHGFLVLGGVVLVITGGEAL), 291-311 (WLGLAMPALLLNYLGQGALLL), 323-343 (LLAPEWALYPTIAIATAAAIV), 381-401 (IYLPEVNWMLGTACLALVLGF), 407-427 (LASAYGIAVTGTMIVTTLLFH), 441-461 (AWPLTSLFLTVDASFFLANVV), and 465-485 (DGGWFPIAAAALVFTLMSTWK).

Belongs to the HAK/KUP transporter (TC 2.A.72) family.

The protein localises to the cell inner membrane. It carries out the reaction K(+)(in) + H(+)(in) = K(+)(out) + H(+)(out). In terms of biological role, transport of potassium into the cell. Likely operates as a K(+):H(+) symporter. This chain is Probable potassium transport system protein Kup, found in Anaeromyxobacter sp. (strain K).